Consider the following 821-residue polypeptide: Leucine--tRNA ligase (821 aa).

The 'HIGH' region signature appears at 42-52; sequence PYPSGKLHMGH. The 'KMSKS' region signature appears at 583–587; the sequence is KMSKS. Lysine 586 contacts ATP.

The protein belongs to the class-I aminoacyl-tRNA synthetase family.

The protein resides in the cytoplasm. The catalysed reaction is tRNA(Leu) + L-leucine + ATP = L-leucyl-tRNA(Leu) + AMP + diphosphate. The sequence is that of Leucine--tRNA ligase from Carboxydothermus hydrogenoformans (strain ATCC BAA-161 / DSM 6008 / Z-2901).